A 1026-amino-acid chain; its full sequence is Multidrug resistance protein MdtC (1026 aa).

The next 11 membrane-spanning stretches (helical) occupy residues 15 to 35 (ILIA…LPVA), 333 to 353 (EVEE…FLFL), 360 to 380 (LIPA…MYLC), 387 to 407 (LSLM…IVVL), 431 to 451 (VGFT…PLLL), 463 to 483 (FAVT…TLTP), 528 to 548 (LVGV…IAIP), 853 to 873 (LILI…LYES), 897 to 917 (LFNA…IGIV), 953 to 973 (PIMM…LSGG), and 984 to 1004 (ITIV…TPVV).

Belongs to the resistance-nodulation-cell division (RND) (TC 2.A.6) family. MdtC subfamily. As to quaternary structure, part of a tripartite efflux system composed of MdtA, MdtB and MdtC. MdtC forms a heteromultimer with MdtB.

Its subcellular location is the cell inner membrane. The polypeptide is Multidrug resistance protein MdtC (Salmonella agona (strain SL483)).